A 430-amino-acid polypeptide reads, in one-letter code: Functional amyloid transporter FapF (430 aa).

A signal peptide spans 1–24 (MHRSLSLRAVVCLSTLLPASLLYA). The Periplasmic portion of the chain corresponds to 25–131 (APDVDIETLK…EASGFFGNGK (107 aa)). Residues 29–64 (DIETLKQELLELKQRYEAQQKALAVLEQRVRQVEDQ) adopt a coiled-coil conformation. The disordered stretch occupies residues 62–114 (EDQPATPAPKRLAKSPADFKQSGSTVAASSGTGGATGGSSYGQSLKDDSEPAQ). The segment covering 92–101 (GTGGATGGSS) has biased composition (gly residues). The segment at 113–125 (AQSVSNLYNEASG) is alpha helical plug. The beta stranded transmembrane segment at 132-142 (FSFETGITYAR) threads the bilayer. Residues 143–172 (YDARQLTLNGFLALDSIFLGNINLDRIKAD) are Extracellular-facing. Residues 173 to 183 (NWTLDLTGRYN) form a beta stranded membrane-spanning segment. Over 184 to 189 (LDNRWQ) the chain is Periplasmic. Residues 190–198 (FDVNVPVVY) traverse the membrane as a beta stranded segment. At 199 to 224 (RESTYQSGGASGGDPQATSEESVSRD) the chain is on the extracellular side. Residues 203 to 223 (YQSGGASGGDPQATSEESVSR) form a disordered region. Residues 225-238 (PTIGDVNFGIAYKF) traverse the membrane as a beta stranded segment. The Periplasmic segment spans residues 239–246 (LDESATMP). A beta stranded membrane pass occupies residues 247–256 (DAVVSVRVKA). At 257 to 288 (PTGKEPFGIKLVRSTANDNLYVPESLPTGNGV) the chain is on the extracellular side. The beta stranded transmembrane segment at 289–298 (WSITPGLSLV) threads the bilayer. Residues 299–304 (KTFDPA) lie on the Periplasmic side of the membrane. The beta stranded transmembrane segment at 305–314 (VLFGSVSYTH) threads the bilayer. The Extracellular segment spans residues 315-339 (NLEDSFDDISSDVNQKVGGKVRLGD). Residues 340–348 (SFQFGVGVA) traverse the membrane as a beta stranded segment. At 349–356 (FALNERMS) the chain is on the periplasmic side. The chain crosses the membrane as a beta stranded span at residues 357 to 365 (MSFSVSDLI). Topologically, residues 366–386 (QRKSKLKPDGGGWQSIVSSDA) are extracellular. Residues 387–397 (NAGYFNVGMTI) traverse the membrane as a beta stranded segment. At 398–404 (AASENLT) the chain is on the periplasmic side. The beta stranded transmembrane segment at 405 to 412 (IVPNLAIG) threads the bilayer. The Extracellular portion of the chain corresponds to 413 to 419 (MTDDAPD). The chain crosses the membrane as a beta stranded span at residues 420–428 (FTFSLKFPY). Topologically, residues 429–430 (YF) are periplasmic.

Belongs to the amyloid transporter (TC 9.B.153) family. As to quaternary structure, homotrimer.

Its subcellular location is the cell outer membrane. Functionally, transports fibril components across the outer membrane. Upon overexpression of the endogenous six-gene locus (fapA-fapF) in situ cells form large clumps during liquid growth, make large amounts of biofilm and produce amyloid fibrils. Expression of the 6 gene operon in E.coli strain BL21(DE3) induces flocculation and biofilm formation with copious extracellular fibrils. This is Functional amyloid transporter FapF from Pseudomonas fluorescens.